The primary structure comprises 393 residues: Mitogen-activated protein kinase 10 (393 aa).

The 286-residue stretch at 60-345 folds into the Protein kinase domain; sequence KPPIRPIGRG…VKEALAHPYL (286 aa). ATP-binding positions include 66–74 and Lys-89; that span reads IGRGACGIV. Asp-186 (proton acceptor) is an active-site residue. Thr-218 bears the Phosphothreonine mark. A TXY motif is present at residues 218 to 220; that stretch reads TEY. Tyr-220 is subject to Phosphotyrosine. Phosphothreonine is present on Thr-223.

This sequence belongs to the protein kinase superfamily. CMGC Ser/Thr protein kinase family. MAP kinase subfamily. In terms of assembly, interacts with MKK2. Dually phosphorylated on Thr-218 and Tyr-220, which activates the enzyme.

It carries out the reaction L-seryl-[protein] + ATP = O-phospho-L-seryl-[protein] + ADP + H(+). It catalyses the reaction L-threonyl-[protein] + ATP = O-phospho-L-threonyl-[protein] + ADP + H(+). Its activity is regulated as follows. Activated by threonine and tyrosine phosphorylation. This Arabidopsis thaliana (Mouse-ear cress) protein is Mitogen-activated protein kinase 10 (MPK10).